A 194-amino-acid chain; its full sequence is MHKIVLASSSPYRRALLEKLRIPFEFHAPDIDETPHAGEEAAPMVQRLAIAKAQALAERYPRHLIIGADQCCVLDGQIAGKPLTEANAIAQLTSAHGKAVTFYTGLALLNSASGALQACTEPFVVRFRALEDAEIAGYVHLEQPLQCAGSFQCEGLGIALFEALEGRDPNTLIGLPLLALADMLRREGVNPLRR.

Catalysis depends on aspartate 69, which acts as the Proton acceptor.

Belongs to the Maf family. YceF subfamily. A divalent metal cation serves as cofactor.

It is found in the cytoplasm. It carries out the reaction N(7)-methyl-GTP + H2O = N(7)-methyl-GMP + diphosphate + H(+). In terms of biological role, nucleoside triphosphate pyrophosphatase that hydrolyzes 7-methyl-GTP (m(7)GTP). May have a dual role in cell division arrest and in preventing the incorporation of modified nucleotides into cellular nucleic acids. This is 7-methyl-GTP pyrophosphatase from Sodalis glossinidius (strain morsitans).